The sequence spans 376 residues: Carbamoyl phosphate synthase small chain (376 aa).

A CPSase region spans residues 1–187 (MKALLVLEDG…AEDGSYAWRG (187 aa)). L-glutamine contacts are provided by Ser45, Gly239, and Gly241. A Glutamine amidotransferase type-1 domain is found at 191-376 (PLLVYDFGIK…RKIIGESAGA (186 aa)). Cys266 serves as the catalytic Nucleophile. Leu267, Gln270, Asn308, Gly310, and Phe311 together coordinate L-glutamine. Active-site residues include His349 and Glu351.

This sequence belongs to the CarA family. In terms of assembly, composed of two chains; the small (or glutamine) chain promotes the hydrolysis of glutamine to ammonia, which is used by the large (or ammonia) chain to synthesize carbamoyl phosphate. Tetramer of heterodimers (alpha,beta)4.

The enzyme catalyses hydrogencarbonate + L-glutamine + 2 ATP + H2O = carbamoyl phosphate + L-glutamate + 2 ADP + phosphate + 2 H(+). The catalysed reaction is L-glutamine + H2O = L-glutamate + NH4(+). It participates in amino-acid biosynthesis; L-arginine biosynthesis; carbamoyl phosphate from bicarbonate: step 1/1. It functions in the pathway pyrimidine metabolism; UMP biosynthesis via de novo pathway; (S)-dihydroorotate from bicarbonate: step 1/3. Its function is as follows. Small subunit of the glutamine-dependent carbamoyl phosphate synthetase (CPSase). CPSase catalyzes the formation of carbamoyl phosphate from the ammonia moiety of glutamine, carbonate, and phosphate donated by ATP, constituting the first step of 2 biosynthetic pathways, one leading to arginine and/or urea and the other to pyrimidine nucleotides. The small subunit (glutamine amidotransferase) binds and cleaves glutamine to supply the large subunit with the substrate ammonia. The chain is Carbamoyl phosphate synthase small chain from Desulfovibrio desulfuricans (strain ATCC 27774 / DSM 6949 / MB).